The chain runs to 1778 residues: Ankyrin repeat domain-containing protein 36C (1778 aa).

ANK repeat units lie at residues 64 to 93 (KERT…ELNL), 97 to 126 (EDRT…DPNI), 130 to 159 (FGRT…NIEE), 163 to 192 (DEYP…NINA), and 196 to 225 (LGRS…DVFS). Disordered regions lie at residues 260–365 (LSIN…DEQK), 501–526 (ALPA…VKDS), 538–653 (DSLT…QKQS), 671–1027 (RITG…QKQL), and 1051–1072 (IRGT…EKDS). 2 stretches are compositionally biased toward polar residues: residues 261–272 (SINSNPVSSQKQ) and 297–306 (KSGTVSSQKQ). Residues 539 to 555 (SLTSSEESSERPPLSTL) show a composition bias toward low complexity. Composition is skewed to basic and acidic residues over residues 585–596 (PAEKATSDDKDS) and 619–630 (PAEKATSDEKDS). 2 stretches are compositionally biased toward polar residues: residues 631–653 (VSNI…QKQS) and 679–691 (GTVS…PSKA). The span at 794–813 (TSDEKDSFSNITREKKDGEI) shows a compositional bias: basic and acidic residues. Ser-829 carries the phosphoserine modification. Composition is skewed to basic and acidic residues over residues 840-849 (RGKEDGEKTR) and 862-881 (TSDE…DGET). Ser-897 bears the Phosphoserine mark. Residues 907 to 917 (AREKKDGEKSR) are compositionally biased toward basic and acidic residues. Basic residues predominate over residues 942-955 (RGKKHGEKTRRVSS). 2 stretches are compositionally biased toward polar residues: residues 983-992 (ISGTVSSQKQ) and 1005-1026 (VSNI…SQKQ). Coiled-coil stretches lie at residues 1157–1187 (EQDL…QIHS), 1247–1333 (ELKD…YRIE), 1362–1480 (SETD…DHDQ), and 1544–1768 (VFEH…ILQH).

This sequence belongs to the ANKRD36 family.

This is Ankyrin repeat domain-containing protein 36C (ANKRD36C) from Homo sapiens (Human).